The following is a 423-amino-acid chain: Zinc finger protein Gfi-1 (423 aa).

Residues 1-20 (MPRSFLVKSKKAHSYHQPRS) form an SNAG domain region. A disordered region spans residues 1 to 76 (MPRSFLVKSK…DRASASPNSC (76 aa)). Residues serine 20 and serine 57 each carry the phosphoserine modification. Residues 48 to 57 (SKMEPRERLS) are compositionally biased toward basic and acidic residues. The tract at residues 141–258 (RQCSALERSA…LLLGGGSYKC (118 aa)) is required for interaction with RELA. 6 consecutive C2H2-type zinc fingers follow at residues 256 to 279 (YKCIKCSKVFSTPHGLEVHVRRSH), 285 to 307 (FACEMCGKTFGHAVSLEQHKAVH), 313 to 335 (FDCKICGKSFKRSSTLSTHLLIH), 341 to 363 (YPCQYCGKRFHQKSDMKKHTFIH), 369 to 391 (HKCQVCGKAFSQSSNLITHSRKH), and 397 to 420 (FGCDLCGKGFQRKVDLRRHRETQH).

Interacts (via the zinc-finger domain) with ARIH2; the interaction prevents GFI1 ubiquitination and proteasomal degradation. Forms a complex with EHMT2 and HDAC1 to promote 'Lys-9' dimethylation of H3 (H3K9Me2) and repress expression of target genes. Interacts directly with EHMT2. Interacts with RUNX1T1; the interaction represses HDAC-mediated transcriptional activity. Interacts (via the C-terminal zinc fingers) with ZBTB17; the interaction results in the recruitment of GFI1 to the CDKN1A/p21 and CDKNIB promoters and repression of transcription. Interacts with U2AF1L4. Component of RCOR-GFI-KDM1A-HDAC complexes. Interacts directly with RCOR1, KDM1A and HDAC2. Also interacts with HDAC1. Component of the GFI1-AJUBA-HDAC1 repressor complex. Interacts directly with AJUBA (via its LIM domains); the interaction results in the HDAC-dependent corepression of a subset of GFI1 target genes and, occurs independently of the SNAG domain. Interacts with SPI1; the interaction inhibits SPI1 transcriptional activity targeted at macrophage-specific genes, repressing macrophage differentiation of myeloid progenitor cells and promoting granulocyte commitment. Interacts with PIAS3; the interaction relieves the inhibitory effect of PIAS3 on STAT3-mediated transcriptional activity. Interacts with RELA; the interaction occurs on liposaccharide (LPS) stimulation and controls RELA DNA binding activity and regulates endotoxin-mediated TOLL-like receptor inflammatory response. Ubiquitinated.

The protein resides in the nucleus. In terms of biological role, transcription repressor essential for hematopoiesis. Functions in a cell-context and development-specific manner. Binds to 5'-TAAATCAC[AT]GCA-3' in the promoter region of a large number of genes. Component of several complexes, including the EHMT2-GFI1-HDAC1, AJUBA-GFI1-HDAC1 and RCOR-GFI-KDM1A-HDAC complexes, that suppress, via histone deacetylase (HDAC) recruitment, a number of genes implicated in multilineage blood cell development. Regulates neutrophil differentiation, promotes proliferation of lymphoid cells, and is required for granulocyte development. Inhibits SPI1 transcriptional activity at macrophage-specific genes, repressing macrophage differentiation of myeloid progenitor cells and promoting granulocyte commitment. Mediates, together with U2AF1L4, the alternative splicing of CD45 and controls T-cell receptor signaling. Regulates the endotoxin-mediated Toll-like receptor (TLR) inflammatory response by antagonizing RELA. Cooperates with CBFA2T2 to regulate ITGB1-dependent neurite growth. Controls cell-cycle progression by repressing CDKNIA/p21 transcription in response to TGFB1 via recruitment of GFI1 by ZBTB17 to the CDKNIA/p21 and CDKNIB promoters. Required for the maintenance of inner ear hair cells. In addition to its role in transcription, acts as a substrate adapter for PRMT1 in the DNA damage response. Facilitates the recognition of TP53BP1 and MRE11 substrates by PRMT1, promoting their methylation and the DNA damage response. The sequence is that of Zinc finger protein Gfi-1 (Gfi1) from Mus musculus (Mouse).